A 312-amino-acid chain; its full sequence is Olfactory receptor 8H3 (312 aa).

At 1 to 26 (MMGRRNDTNVADFILTGLSDSEEVQM) the chain is on the extracellular side. Asn-6 carries an N-linked (GlcNAc...) asparagine glycan. The chain crosses the membrane as a helical span at residues 27–47 (ALFMLFLLIYLITMLGNVGML). Residues 48-55 (LIIRLDLQ) lie on the Cytoplasmic side of the membrane. The chain crosses the membrane as a helical span at residues 56–76 (LHTPMYFFLTHLSFIDLSYST). Residues 77 to 99 (VVTPKTLANLLTSNYISFTGCFA) lie on the Extracellular side of the membrane. An intrachain disulfide couples Cys-97 to Cys-189. A helical membrane pass occupies residues 100–120 (QMFCFVFLGTAECYLLSSMAY). Over 121-139 (DRYAAICSPLHYTVIMPKR) the chain is Cytoplasmic. Residues 140–160 (LCLALITGPYVIGFMDSFVNV) traverse the membrane as a helical segment. The Extracellular portion of the chain corresponds to 161–197 (VSMSRLHFCDSNIIHHFFCDTSPILALSCTDTDNTEM). Residues 198–217 (LIFIIAGSTLMVSLITISAS) form a helical membrane-spanning segment. At 218–237 (YVSILSTILKINSTSGKQKA) the chain is on the cytoplasmic side. A helical transmembrane segment spans residues 238–258 (FSTCVSHLLGVTIFYGTMIFT). The Extracellular segment spans residues 259-271 (YLKPRKSYSLGRD). A helical transmembrane segment spans residues 272-292 (QVAPVFYTIVIPMLNPLIYSL). The Cytoplasmic portion of the chain corresponds to 293–312 (RNREVKNALIRVMQRRQDSR).

This sequence belongs to the G-protein coupled receptor 1 family.

Its subcellular location is the cell membrane. Its function is as follows. Odorant receptor. This is Olfactory receptor 8H3 (OR8H3) from Homo sapiens (Human).